Consider the following 2617-residue polypeptide: MKILFFMIQIKNRNKLNNKNDFIINQIEKKNTQIIITKTLKKNFKNVKLNYYWNQTFDKNRLKNFIFWCLKNYGQNKTIKVLEILKYLGFKYATKAGLSLSIDDLIIPPTKSKLLIEAELTTRTAMLQYKNAQITNLERFQQIIETWHITSEKMKDDMIYHFKTTNIFNPLYMMAFSGARGNVSQVRQLVGMRGLMANPQGQILDFPIQSNFREGLTLTEYVISCYGARKGVVDTALRTANAGYLTRRLVDVAQHVIISNFDCGTHRGIIISEMKQGNKLLFSLRQRLLGRVLAKDVKSGDLLIAKKNQEISDHLSEIIASIVKTVIIRSPLTCKTTQFICQLCYGWSLAEGRLVGVGETVGIIAAQSIGEPGTQLTMRTFHTGGVFAGELLDQLIAPFDGIIKYNIYIPGNMIRTPQGKIAFLTRIDSQLIIQSCSNLNNQKYYTIPPYTILFIRNMETVSKNQLIAQLCSFSPSLKNSSDLIEYKIYSDLEGEIKSTNFKILKKVTEMRDIMYQSLEWGYIWILSGKIYQLPFHSIDNLKLQYTFQQKNNFFPIKGDFLTNSSILSQILWINNLENVRLNFKQKHIFYQKFIKNSYNYTCINNSNQIQMKWLKKWQKLSEISTFLNLNKSIKTFKSNFNMDLSKENRLINIYSQNLLLFLTIDKIRYKKFGYFIFFQNNLKNRSLRNIKNSIKQNKEIVVNFNYLKKNSLKHFIFDHKFFIPISLESTDFVNKENSLITSPRFFYQKLSNRFFEWFFNQENQIGSGLIQLSEIFVFKKNLQKEISKKNQIRKKQEKNVKLKYHSLTLKKKKGLSNQFYTYNCMNSYSSETRYFPHTSCFLNHFNNEKINKYLNTNYSLIFFYFRPFIQCEKQQLSQFHYINNKKYFDNLSLLLKPTIIASKKKQIRVNMKNTYEYLNQKIYDLKKQLIKNKLFQKIGKYESNKFFRLISNHIKKYQIIKKTNTHTIERVNVTKFKLVYNSGIDNFNKRNYFINHKKKRYLKTYISFHPLNFFNKIFNHGNFLLKKKFYYKLQLIMLCKNNNDKFNSMCQVRCNSFFTTLSTNFLTKKIFFDFNFDKTHKKDFFLKKNDFISFSFFNKFSNIFISFSKSPTNYIDDTHNFMNSYKYISNEFFYLNWSNIVNKHKIFKEYVFKNNFNKSKEMQNIKNLKKLHSSFTYYIIKNQFRFAPSFQKQSINELENIYKKEINQVSDTYNCIIKHRLLCINQLNNNFLSYLTYVKLYEFNIYKKSPINTLIKLNLDTYNCMNDKFNIQKFINQIENKKNGLDNQKKCNKNMKKIFYLQILLNQLRKFYNYLFNKKTQKLLFKNNNYKQKNIEKDILNNNTILNSIYYKKCVPILLIKYKKIQITMNTRSLHTIYIFNNFLIRKPSRKKNSIFVNKKISLINNQKTHSLLKMYLIKMHSLNNLVINAYFQSVSFKWLKKQTDRSLRKKRIFNQIFLKRLEFAKFINKNLIISHEKMQPTVLDFSDKLNSSQQTENKKIKTLNKKRLYKNNISKIANEILFLYSRFLLIPKEYSTISKKQLSFLFFHPQQHLHCINPFYKILETRTLYELWNSNNLSFFHKSVFFTKKKFISNRKLKLKRTLKLLTLKNYLNFKKIDSYNCMCIVSTNNYLQKINTFIFNLFHNLFHTYFQLFKNNRQGNYIPLKYNNYYGIFQLNKKNPKRDFSKFKYIQQKYYPDKNLFYLSEKSSIFLNKNWQLYKNKKEFLLTSQPGWICKPIKKTHTINVDSDFLSNYSLHSITQLLKKNLKLYNQNYINYFKSIPVSYRFCERNLIWFNFTFLKMIELVKKFFKDTYNCMNPLLFLPFFHSFSNFIRYNENFKNIKTSNSKKIKKNGWLINKKSRFLKMKKSNMFFCLKKTTNKIDNIFLFVEGQEFIINNYQNLSYISDTNLLCLSKKKLFKMSEKQYKSKSLRNNNGLIWKSQYNSIFLNKQKISQKLIFKFPNLETTFEQYLGIPFNKISKTFNKENNIKISYDINRKMRTYTYNYINYRNFPSNHIQQYSEINQILTKSNSFNLINKNYKIFKSQKSLNTFRHFLGFSIPITFDFSFQSSHIFWNYYPNYNLSNLKLDKRKKSMEFFNYLILKNKLLNLNIIKVKKSRHVLLYEDSINFINIFNSIEMLLRQPCINWSTTKKINLGYQKNIFLAPTKTFLLLSLENSSVTNNPIALTEIFSNMEGEILYSLKNKKNHPPFHYPLKSGDKNKFEFNEFLQKYDRSIFLTKSDQICLKFKNEIYLNNELAFLKKFNVFKNQKHIRGLKTFQIKSSKQIFLIFKILQKIHNNCQFSNQSIKIKLGLFLFQGDLLNTFFRNSNINNNTFNCVSIIKNKKTTKIQKNYKRSIVCVVNHSGQIIHLNQHKLTLRKGQPIFFSPHCIFHSYNSDFIEQNKPVLSLPYQQLKTGDIVQGIPKIEQLFEARLTFAGKLEYDNLTNILEIIFQTYKNKLTLKLAVRRSIELVQMIIVNSIQRIYRSQGVNISDKHLEVIVKQMTKKVEIIDSGQSGFLIGEHFDLDVVELWNSKLSKIKHVKYKPLILGISKASLQTDSFLSAASFQYTTRILSQSAFFKKRDFLKGLKENIIVGNIIPAGTGYLGHIEDLFETS.

Cys263, Cys334, Cys341, and Cys344 together coordinate Zn(2+).

This sequence belongs to the RNA polymerase beta' chain family. RpoC2 subfamily. As to quaternary structure, in plastids the minimal PEP RNA polymerase catalytic core is composed of four subunits: alpha, beta, beta', and beta''. When a (nuclear-encoded) sigma factor is associated with the core the holoenzyme is formed, which can initiate transcription. Zn(2+) is required as a cofactor.

The protein resides in the plastid. It is found in the chloroplast. The catalysed reaction is RNA(n) + a ribonucleoside 5'-triphosphate = RNA(n+1) + diphosphate. DNA-dependent RNA polymerase catalyzes the transcription of DNA into RNA using the four ribonucleoside triphosphates as substrates. This chain is DNA-directed RNA polymerase subunit beta'', found in Oedogonium cardiacum (Filamentous green alga).